Reading from the N-terminus, the 261-residue chain is uncharacterized protein (261 aa).

A run of 2 helical transmembrane segments spans residues R4–L21 and F33–F55.

Its subcellular location is the cell membrane. This is an uncharacterized protein from Archaeoglobus fulgidus (strain ATCC 49558 / DSM 4304 / JCM 9628 / NBRC 100126 / VC-16).